The sequence spans 920 residues: Whirlin (920 aa).

In terms of domain architecture, PDZ 1 spans 141 to 224 (LVSLRRAKAH…LVLSVYSAGR (84 aa)). Residues 241–262 (QGRSTSPPSSLPHGSTLRQHED) form a disordered region. Positions 242-257 (GRSTSPPSSLPHGSTL) are enriched in polar residues. In terms of domain architecture, PDZ 2 spans 278–360 (KVNLVLGDGR…LILTVKDVGR (83 aa)). Disordered stretches follow at residues 502 to 536 (MKARQPPGPGVGDTYSMVSYSDTGSSTGSHGTSTT), 561 to 603 (CETT…QGHD), 630 to 730 (FSAP…AMGA), and 752 to 828 (RALP…PTST). Positions 520-536 (SYSDTGSSTGSHGTSTT) are enriched in low complexity. Residues 561-570 (CETTQGSTNA) show a composition bias toward polar residues. 2 stretches are compositionally biased toward pro residues: residues 589 to 598 (IKPPPPPPPL) and 636 to 651 (RSPPPPPGIAPTPTPG). The segment covering 655–674 (ARDSPSSPIYASISHANPSS) has biased composition (polar residues). A Phosphoserine modification is found at serine 698. Polar residues-rich tracts occupy residues 756 to 775 (QTRTASTLSQLSDSGQTLSE) and 785 to 800 (EASTSGRGRQTANTKN). Positions 802 to 813 (NGKELPQTERTT) are enriched in basic and acidic residues. One can recognise a PDZ 3 domain in the interval 829–912 (LIRVRKSAAT…TKERDYIDFL (84 aa)).

In terms of assembly, forms homooligomers. Interacts (via C-terminal PDZ domain) with MYO15A; this interaction is necessary for localization of WHRN to stereocilia tips. Interacts (via C-terminal PDZ domain) with MPP1/p55. Interacts with LRRC4C/NGL1. Interacts with MYO7A. Interacts with RPGR. Interacts with EPS8. Interacts with CASK. Interacts with CIB2. Component of USH2 complex, composed of ADGRV1, PDZD7, USH2A and WHRN. Interacts (via PDZ domains) with PDZD7; the interaction is direct. Interacts (via N-terminal PDZ domain) with USH2A (via cytoplasmic region). Interacts with ADGRV1/MASS1 (via cytoplasmic region). As to expression, ubiquitous. Highly expressed in heart, spleen, lung and liver. Highly expressed in brain, in the olfactory bulb, thalamus, layers III-V of the cerebral cortex and the molecular layer of cerebellum. Detected in soma and dendrites of thalamic neurons, and in cerebrum in cell bodies and apical dendrites of pyramidal neurons. Expressed in retina and inner ear.

The protein localises to the cytoplasm. Its subcellular location is the cell projection. The protein resides in the stereocilium. It localises to the growth cone. It is found in the synapse. In terms of biological role, involved in hearing and vision as member of the USH2 complex. Necessary for elongation and maintenance of inner and outer hair cell stereocilia in the organ of Corti in the inner ear. Involved in the maintenance of the hair bundle ankle region, which connects stereocilia in cochlear hair cells of the inner ear. In retina photoreceptors, required for the maintenance of periciliary membrane complex that seems to play a role in regulating intracellular protein transport. The polypeptide is Whirlin (Rattus norvegicus (Rat)).